The sequence spans 429 residues: MKTSILILAAGLGTRIKSQKPKVLQELCQKSMILHILKKAFALSDDVSVVLSHQKERVEKEILEYFPKTQILEQDLQNYPGTAGALSGFEPKNERVLILCGDMPLVEQTSLEALLGNNAKLNLAVFKARDPKSYGRVVIKNDSVEKIVEFKDANTQEKEINTCNAGVYVIDSRLLKELLPLIDNNNAAKEYYLTDIVKLAKEKDVMIKAVFVDEDEFMGINDKFELSIAENFMQKKIKKYWMQQGVIFHLPQSTFIGADVEFVGECEVYENVRIEGKSKIINSIIKSSSVIENSIVENSDVGPLAHLRPNCELKNTHIGNFVECKNAKLNTVKAGHLSYLGDCEIDSGTNIGCGTITCNYDGVKKHKTIIGKNVFVGSDTQFIAPVKIEDEVIIAAGSTVSINVEKGALFINRAGHKMIKDYYYKKFQK.

The tract at residues 1–223 (MKTSILILAA…EDEFMGINDK (223 aa)) is pyrophosphorylase. Residues 8 to 11 (LAAG), lysine 22, and 81 to 82 (GT) each bind UDP-N-acetyl-alpha-D-glucosamine. Aspartate 102 is a Mg(2+) binding site. Residues glycine 135, glutamate 149, asparagine 164, and asparagine 221 each contribute to the UDP-N-acetyl-alpha-D-glucosamine site. Position 221 (asparagine 221) interacts with Mg(2+). A linker region spans residues 224-244 (FELSIAENFMQKKIKKYWMQQ). The tract at residues 245–429 (GVIFHLPQST…KDYYYKKFQK (185 aa)) is N-acetyltransferase. Residues arginine 308 and lysine 325 each coordinate UDP-N-acetyl-alpha-D-glucosamine. The Proton acceptor role is filled by histidine 336. Tyrosine 339 and asparagine 350 together coordinate UDP-N-acetyl-alpha-D-glucosamine. Acetyl-CoA is bound by residues 359–360 (NY), serine 378, alanine 396, and arginine 413.

In the N-terminal section; belongs to the N-acetylglucosamine-1-phosphate uridyltransferase family. This sequence in the C-terminal section; belongs to the transferase hexapeptide repeat family. In terms of assembly, homotrimer. Mg(2+) serves as cofactor.

The protein localises to the cytoplasm. It catalyses the reaction alpha-D-glucosamine 1-phosphate + acetyl-CoA = N-acetyl-alpha-D-glucosamine 1-phosphate + CoA + H(+). The enzyme catalyses N-acetyl-alpha-D-glucosamine 1-phosphate + UTP + H(+) = UDP-N-acetyl-alpha-D-glucosamine + diphosphate. It functions in the pathway nucleotide-sugar biosynthesis; UDP-N-acetyl-alpha-D-glucosamine biosynthesis; N-acetyl-alpha-D-glucosamine 1-phosphate from alpha-D-glucosamine 6-phosphate (route II): step 2/2. Its pathway is nucleotide-sugar biosynthesis; UDP-N-acetyl-alpha-D-glucosamine biosynthesis; UDP-N-acetyl-alpha-D-glucosamine from N-acetyl-alpha-D-glucosamine 1-phosphate: step 1/1. It participates in bacterial outer membrane biogenesis; LPS lipid A biosynthesis. Functionally, catalyzes the last two sequential reactions in the de novo biosynthetic pathway for UDP-N-acetylglucosamine (UDP-GlcNAc). The C-terminal domain catalyzes the transfer of acetyl group from acetyl coenzyme A to glucosamine-1-phosphate (GlcN-1-P) to produce N-acetylglucosamine-1-phosphate (GlcNAc-1-P), which is converted into UDP-GlcNAc by the transfer of uridine 5-monophosphate (from uridine 5-triphosphate), a reaction catalyzed by the N-terminal domain. The polypeptide is Bifunctional protein GlmU (Campylobacter jejuni subsp. jejuni serotype O:2 (strain ATCC 700819 / NCTC 11168)).